The following is a 492-amino-acid chain: Fibroblast growth factor receptor substrate 3 (492 aa).

Residue G2 is the site of N-myristoyl glycine attachment. Residues 13–115 (VPHNHPTKFK…QCNSINVTEE (103 aa)) enclose the IRS-type PTB domain. Disordered regions lie at residues 125–205 (PQEL…EDRR), 337–413 (QQLR…EPPR), and 425–492 (WGTA…DLPL). 2 stretches are compositionally biased toward polar residues: residues 133–147 (GSSQ…SFSN) and 166–185 (PSTS…QTLI). Low complexity predominate over residues 374–385 (TSTRASARSHSS).

As to quaternary structure, binds NTRK1, FGFR1, NGFR, GRB2, PTPN11 and ERK2. Post-translationally, phosphorylated on tyrosine residues upon stimulation by BFGF or NGFB.

The protein resides in the membrane. Adapter protein that links FGF and NGF receptors to downstream signaling pathways. Involved in the activation of MAP kinases. Down-regulates ERK2 signaling by interfering with the phosphorylation and nuclear translocation of ERK2. The chain is Fibroblast growth factor receptor substrate 3 (Frs3) from Rattus norvegicus (Rat).